The following is a 274-amino-acid chain: Anamorsin homolog (274 aa).

Positions 1 to 154 (MDRTRKQCSV…KKPSWKIGSS (154 aa)) are N-terminal SAM-like domain. The segment at 154–185 (SFALKKSTKGSVKVNLDDDLIDEDSLLTEEDM) is linker. [2Fe-2S] cluster contacts are provided by Cys196, Cys205, Cys208, and Cys210. The fe-S binding site A stretch occupies residues 196 to 210 (CEVGSTRKACKNCTC). 4 residues coordinate [4Fe-4S] cluster: Cys235, Cys238, Cys246, and Cys249. Short sequence motifs (cx2C motif) lie at residues 235–238 (CGSC) and 246–249 (CSTC). The interval 235–249 (CGSCGLGDAFRCSTC) is fe-S binding site B.

Belongs to the anamorsin family. In terms of assembly, monomer. [2Fe-2S] cluster serves as cofactor. The cofactor is [4Fe-4S] cluster.

The protein resides in the cytoplasm. The protein localises to the mitochondrion intermembrane space. Component of the cytosolic iron-sulfur (Fe-S) protein assembly (CIA) machinery. Required for the maturation of extramitochondrial Fe-S proteins. Part of an electron transfer chain functioning in an early step of cytosolic Fe-S biogenesis, facilitating the de novo assembly of a [4Fe-4S] cluster on the cytosolic Fe-S scaffold complex. Electrons are transferred from NADPH via a FAD- and FMN-containing diflavin oxidoreductase. Together with the diflavin oxidoreductase, also required for the assembly of the diferric tyrosyl radical cofactor of ribonucleotide reductase (RNR), probably by providing electrons for reduction during radical cofactor maturation in the catalytic small subunit. The polypeptide is Anamorsin homolog (Ricinus communis (Castor bean)).